The following is a 112-amino-acid chain: Cytochrome c3 (112 aa).

H26, H29, C34, C37, H38, H39, C49, C54, H55, H73, C83, C86, H87, C104, C109, and H110 together coordinate heme c.

The cofactor is heme.

Its function is as follows. Participates in sulfate respiration coupled with phosphorylation by transferring electrons from the enzyme dehydrogenase to ferredoxin. This Megalodesulfovibrio gigas (strain ATCC 19364 / DSM 1382 / NCIMB 9332 / VKM B-1759) (Desulfovibrio gigas) protein is Cytochrome c3.